The sequence spans 161 residues: MKKPLILFLITAGLVLLLDQFTKFYVASHFWLHESLPVIDGFFNITYIRNPGAAFGFLAGAPLLFRGLFFTSVTLIAAGLILFYLIKNRVSDLMMVIPLALVLAGAMGNLVDRIRFGEVIDFLDVYIGRYHWPAFNIADTAISIGVLFLVVDMIQKQKEKS.

A run of 3 helical transmembrane segments spans residues 6-26 (ILFLITAGLVLLLDQFTKFYV), 67-87 (GLFFTSVTLIAAGLILFYLIK), and 90-110 (VSDLMMVIPLALVLAGAMGNL). Active-site residues include aspartate 121 and aspartate 139. A helical membrane pass occupies residues 134 to 154 (AFNIADTAISIGVLFLVVDMI).

Belongs to the peptidase A8 family.

It is found in the cell inner membrane. It carries out the reaction Release of signal peptides from bacterial membrane prolipoproteins. Hydrolyzes -Xaa-Yaa-Zaa-|-(S,diacylglyceryl)Cys-, in which Xaa is hydrophobic (preferably Leu), and Yaa (Ala or Ser) and Zaa (Gly or Ala) have small, neutral side chains.. It functions in the pathway protein modification; lipoprotein biosynthesis (signal peptide cleavage). Its function is as follows. This protein specifically catalyzes the removal of signal peptides from prolipoproteins. The sequence is that of Lipoprotein signal peptidase from Syntrophus aciditrophicus (strain SB).